An 86-amino-acid chain; its full sequence is Small ribosomal subunit protein bS20 (86 aa).

This sequence belongs to the bacterial ribosomal protein bS20 family.

Functionally, binds directly to 16S ribosomal RNA. In Mycolicibacterium vanbaalenii (strain DSM 7251 / JCM 13017 / BCRC 16820 / KCTC 9966 / NRRL B-24157 / PYR-1) (Mycobacterium vanbaalenii), this protein is Small ribosomal subunit protein bS20.